A 286-amino-acid chain; its full sequence is Pantothenate synthetase (286 aa).

Residue 30–37 participates in ATP binding; that stretch reads MGNLHSGH. The Proton donor role is filled by His-37. Gln-61 is a binding site for (R)-pantoate. Gln-61 contributes to the beta-alanine binding site. 149 to 152 serves as a coordination point for ATP; sequence GQKD. Position 155 (Gln-155) interacts with (R)-pantoate. ATP contacts are provided by residues Val-178 and 186-189; that span reads LSSR.

This sequence belongs to the pantothenate synthetase family. In terms of assembly, homodimer.

The protein localises to the cytoplasm. The enzyme catalyses (R)-pantoate + beta-alanine + ATP = (R)-pantothenate + AMP + diphosphate + H(+). It participates in cofactor biosynthesis; (R)-pantothenate biosynthesis; (R)-pantothenate from (R)-pantoate and beta-alanine: step 1/1. In terms of biological role, catalyzes the condensation of pantoate with beta-alanine in an ATP-dependent reaction via a pantoyl-adenylate intermediate. The sequence is that of Pantothenate synthetase from Pseudomonas fluorescens (strain Pf0-1).